A 207-amino-acid chain; its full sequence is Ras-related protein Rab7 (207 aa).

Residues glycine 15–threonine 22, aspartate 63–glutamine 67, and asparagine 125–aspartate 128 each bind GTP. 2 S-geranylgeranyl cysteine lipidation sites follow: cysteine 205 and cysteine 207. Cysteine 207 carries the cysteine methyl ester modification.

Belongs to the small GTPase superfamily. Rab family.

The protein resides in the cell membrane. Protein transport. Probably involved in vesicular traffic. The sequence is that of Ras-related protein Rab7 from Prunus armeniaca (Apricot).